Reading from the N-terminus, the 260-residue chain is Ribonuclease HII (260 aa).

The 188-residue stretch at 73 to 260 (LHIAGIDEAG…APVQQQLDIV (188 aa)) folds into the RNase H type-2 domain. A divalent metal cation-binding residues include Asp-79, Glu-80, and Asp-171.

It belongs to the RNase HII family. It depends on Mn(2+) as a cofactor. Mg(2+) is required as a cofactor.

It localises to the cytoplasm. It catalyses the reaction Endonucleolytic cleavage to 5'-phosphomonoester.. Its function is as follows. Endonuclease that specifically degrades the RNA of RNA-DNA hybrids. The sequence is that of Ribonuclease HII from Desulfitobacterium hafniense (strain Y51).